We begin with the raw amino-acid sequence, 200 residues long: Probable nicotinate-nucleotide adenylyltransferase (200 aa).

It belongs to the NadD family.

The enzyme catalyses nicotinate beta-D-ribonucleotide + ATP + H(+) = deamido-NAD(+) + diphosphate. The protein operates within cofactor biosynthesis; NAD(+) biosynthesis; deamido-NAD(+) from nicotinate D-ribonucleotide: step 1/1. In terms of biological role, catalyzes the reversible adenylation of nicotinate mononucleotide (NaMN) to nicotinic acid adenine dinucleotide (NaAD). The sequence is that of Probable nicotinate-nucleotide adenylyltransferase from Clostridium tetani (strain Massachusetts / E88).